The following is a 496-amino-acid chain: Probable malate:quinone oxidoreductase (496 aa).

Belongs to the MQO family. FAD is required as a cofactor.

It carries out the reaction (S)-malate + a quinone = a quinol + oxaloacetate. It participates in carbohydrate metabolism; tricarboxylic acid cycle; oxaloacetate from (S)-malate (quinone route): step 1/1. This chain is Probable malate:quinone oxidoreductase, found in Prochlorococcus marinus (strain NATL2A).